The chain runs to 94 residues: MLLDLSKIFGKSKNSKDLAKERLKLVLIHDRANVSPQFLEMVKGEIIKVISNYMDVDEESLDIQMTRTKSEDGNSVVPALVANIPIRSVKNSGK.

It belongs to the MinE family.

Its function is as follows. Prevents the cell division inhibition by proteins MinC and MinD at internal division sites while permitting inhibition at polar sites. This ensures cell division at the proper site by restricting the formation of a division septum at the midpoint of the long axis of the cell. In Acetivibrio thermocellus (strain ATCC 27405 / DSM 1237 / JCM 9322 / NBRC 103400 / NCIMB 10682 / NRRL B-4536 / VPI 7372) (Clostridium thermocellum), this protein is Cell division topological specificity factor.